Reading from the N-terminus, the 1012-residue chain is DNA polymerase catalytic subunit (1012 aa).

The protein belongs to the DNA polymerase type-B family.

The protein localises to the host nucleus. The catalysed reaction is DNA(n) + a 2'-deoxyribonucleoside 5'-triphosphate = DNA(n+1) + diphosphate. Replicates viral genomic DNA. This chain is DNA polymerase catalytic subunit (U38), found in Human herpesvirus 6B (strain Z29) (HHV-6 variant B).